The primary structure comprises 1201 residues: Potassium/sodium hyperpolarization-activated cyclic nucleotide-gated channel 4 (1201 aa).

At 1–263 (MDKLPPSMRK…IIHPYSDFRF (263 aa)) the chain is on the cytoplasmic side. The segment at 24–183 (WIMDEEEDGE…PASASCEQPS (160 aa)) is disordered. A compositionally biased stretch (acidic residues) spans 26-36 (MDEEEDGEEEG). Residues 105-118 (SRGGGSGGAGGGSS) are compositionally biased toward gly residues. Positions 121-132 (HLHDSAEERRLI) are enriched in basic and acidic residues. Ser-139 bears the Phosphoserine mark. The span at 164-174 (ASPPPQQPPQP) shows a compositional bias: pro residues. The involved in subunit assembly stretch occupies residues 209–260 (GQSGFMQRQFGAMLQPGVNKFSLRMFGSQKAVEREQERVKSAGFWIIHPYSD). A helical membrane pass occupies residues 264–286 (YWDLTMLLLMVGNLIIIPVGITF). Topologically, residues 287–293 (FKDENTT) are extracellular. Residues 294–314 (PWIVFNVVSDTFFLIDLVLNF) traverse the membrane as a helical segment. At 315 to 336 (RTGIVVEDNTEIILDPQRIKMK) the chain is on the cytoplasmic side. Residues 337-359 (YLKSWFVVDFISSIPVDYIFLIV) traverse the membrane as a helical segment. Residues 360–378 (ETRIDSEVYKTARALRIVR) lie on the Extracellular side of the membrane. Residues 379–399 (FTKILSLLRLLRLSRLIRYIH) traverse the membrane as a helical; Voltage-sensor segment. Residues 400–413 (QWEEIFHMTYDLAS) are Cytoplasmic-facing. A helical membrane pass occupies residues 414 to 436 (AVVRIVNLIGMMLLLCHWDGCLQ). The Extracellular segment spans residues 437–464 (FLVPMLQDFPHDCWVSINGMVNNSWGKQ). The N-linked (GlcNAc...) asparagine glycan is linked to Asn-458. An intramembrane region (pore-forming) is located at residues 465–486 (YSYALFKAMSHMLCIGYGRQAP). The Extracellular segment spans residues 487–491 (VGMSD). Residues 492 to 517 (VWLTMLSMIVGATCYAMFIGHATALI) traverse the membrane as a helical segment. Residues 518–1201 (QSLDSSRRQY…PVRSKLPSNL (684 aa)) are Cytoplasmic-facing. The 3',5'-cyclic GMP site is built by Tyr-559, Lys-562, Phe-564, and Glu-566. 3',5'-cyclic AMP contacts are provided by Gly-659, Glu-660, Cys-662, Arg-669, Thr-670, Val-673, and Arg-710. 2 disordered regions span residues 804-902 (AIFR…TAAA) and 914-1201 (ALGG…PSNL). Composition is skewed to low complexity over residues 831–856 (SLIP…SSSS) and 866–880 (SAPP…SSSS). Pro residues predominate over residues 881 to 894 (SPPPGACGSPPAPT). Composition is skewed to low complexity over residues 915-939 (LGGS…SPQA) and 967-995 (RSPS…SSTP). Pro residues predominate over residues 1029 to 1042 (GHSPGPPRTFPSAP). Residues 1045–1056 (ASGSHGSLLLPP) are compositionally biased toward low complexity. 2 positions are modified to phosphoserine: Ser-1105 and Ser-1108. The span at 1122-1134 (AGGGSGSSGGLGP) shows a compositional bias: gly residues.

This sequence belongs to the potassium channel HCN family. Homotetramer. The potassium channel is composed of a homo- or heterotetrameric complex of pore-forming subunits. Interacts with PEX5L with a 4:4 HCN4:PEX5L stoichiometry; reduces the effects of cAMP on the voltage-dependence and rate of activation. Interacts with IRAG1; regulates HCN4 channel activity. Interacts with IRAG2; regulates HCN4 channel activity. Post-translationally, S-palmitoylated. Detected in a subset of elongated cells in taste buds.

Its subcellular location is the cell membrane. The enzyme catalyses K(+)(in) = K(+)(out). The catalysed reaction is Na(+)(in) = Na(+)(out). Its activity is regulated as follows. Activated by cAMP, and to a lesser extent by cGMP and cCMP. cAMP binding causes a conformation change that leads to the assembly of an active tetramer and channel opening. Binding of cAMP removes a tonic inhibition conferred by cyclic nucleotide-binding domain (CNBD) on channel opening. Cyclic dinucleotides can modulate HCN4 channel; cyclic dinucleotides acting as potent antagonists of cAMP. Inhibited by extracellular Cs(+) ions. Auxiliary subunits can also regulate HCN4 channel. IRAG1 causes a gain-of-function by shifting HCN4 activation to more depolarized membrane potentials in the absence of cAMP. In contrast, IRAG2 causes a loss-of-function by inhibiting cAMP-dependent potentiation of HCN4 activation. In terms of biological role, hyperpolarization-activated ion channel that are permeable to Na(+) and K(+) ions with very slow activation and inactivation. Exhibits higher selectivity for K(+) over Na(+) ions. Contributes to the native pacemaker currents in heart (If) that regulate the rhythm of heart beat. Contributes to the native pacemaker currents in neurons (Ih). May mediate responses to sour stimuli. The polypeptide is Potassium/sodium hyperpolarization-activated cyclic nucleotide-gated channel 4 (Hcn4) (Mus musculus (Mouse)).